The chain runs to 106 residues: Nucleoid-associated protein BBta_7345 (106 aa).

It belongs to the YbaB/EbfC family. As to quaternary structure, homodimer.

The protein localises to the cytoplasm. The protein resides in the nucleoid. Functionally, binds to DNA and alters its conformation. May be involved in regulation of gene expression, nucleoid organization and DNA protection. The sequence is that of Nucleoid-associated protein BBta_7345 from Bradyrhizobium sp. (strain BTAi1 / ATCC BAA-1182).